We begin with the raw amino-acid sequence, 538 residues long: Cytochrome P450 monooxygenase claM (538 aa).

The helical transmembrane segment at 36–56 (LSIGLVVLIGAISSFLLQQFL) threads the bilayer. N-linked (GlcNAc...) asparagine glycosylation is found at Asn-306 and Asn-425. Cys-472 lines the heme pocket.

Belongs to the cytochrome P450 family. The cofactor is heme.

Its subcellular location is the membrane. It carries out the reaction 2 nataloe emodin + reduced [NADPH--hemoprotein reductase] + O2 = cladofulvin + oxidized [NADPH--hemoprotein reductase] + 2 H2O + H(+). The protein operates within pigment biosynthesis. In terms of biological role, cytochrome P450 monooxygenase; part of the gene cluster that mediates the biosynthesis of the bianthraquinone cladofulvin, a conidial pigment not required for virulence but that plays a role in fitness and resistance to environmental stresses including UV light and low-temperature stress. The pathway begins with the synthesis of atrochrysone thioester by the polyketide synthase (PKS) claG. The atrochrysone carboxyl ACP thioesterase claF then breaks the thioester bond and releases the atrochrysone carboxylic acid from claG. This compound is decarboxylated by claH to yield emodin, which is further converted to chrysophanol hydroquinone by the reductase claC and the dehydratase claB. The cytochrome monooxygenase P450 claM then catalyzes the dimerization of nataloe-emodin to cladofulvin. The chain is Cytochrome P450 monooxygenase claM from Passalora fulva (Tomato leaf mold).